The sequence spans 350 residues: Isopentenyl-diphosphate delta-isomerase (350 aa).

Residue 15-16 participates in substrate binding; the sequence is RK. FMN-binding positions include serine 73, 74–76, serine 104, and asparagine 132; that span reads SMT. Residue 104–106 participates in substrate binding; it reads SQR. Glutamine 167 is a substrate binding site. Glutamate 168 contributes to the Mg(2+) binding site. Residues lysine 199, threonine 229, 279–281, and 300–301 contribute to the FMN site; these read GLR and AM.

Belongs to the IPP isomerase type 2 family. As to quaternary structure, homooctamer. Dimer of tetramers. It depends on FMN as a cofactor. Requires NADPH as cofactor. Mg(2+) is required as a cofactor.

Its subcellular location is the cytoplasm. The enzyme catalyses isopentenyl diphosphate = dimethylallyl diphosphate. In terms of biological role, involved in the biosynthesis of isoprenoids. Catalyzes the 1,3-allylic rearrangement of the homoallylic substrate isopentenyl (IPP) to its allylic isomer, dimethylallyl diphosphate (DMAPP). The protein is Isopentenyl-diphosphate delta-isomerase of Nostoc sp. (strain PCC 7120 / SAG 25.82 / UTEX 2576).